Reading from the N-terminus, the 837-residue chain is Anaphase-promoting complex subunit 4 (837 aa).

2 stretches are compositionally biased toward low complexity: residues 59 to 81 (NDNN…NDNN) and 547 to 581 (SSSS…NNNN). Disordered stretches follow at residues 59–89 (NDNN…KSNK) and 547–588 (SSSS…QSGN).

The protein belongs to the APC4 family. In terms of assembly, the APC/C is composed of at least 13 subunits that stay tightly associated throughout the cell cycle: anapc1, anapc2, anapc3, anapc4, anapc5, anapc6, anapc7, anapc8, anapc10, anapc11, cdc20, cdc26 and cdh1.

It is found in the nucleus. It participates in protein modification; protein ubiquitination. In terms of biological role, component of the anaphase promoting complex/cyclosome (APC/C), a cell cycle-regulated E3 ubiquitin-protein ligase complex that controls progression through mitosis and the G1 phase of the cell cycle. The polypeptide is Anaphase-promoting complex subunit 4 (anapc4) (Dictyostelium discoideum (Social amoeba)).